The sequence spans 434 residues: MAPPRWHHDRRRMAIFVRVGLYTLLFLMGYVVPLIIFYNRSRADTFEDTPRSGEAFISDENFFHCIAERLSYKEQHPARIPYVLIPVTMDYQDIKQLFCNITVPMTYIMFINNGMFRPLRSLLDRLAVDLRDYVDQNLFIIHHPENIAYASAVNEGLRHALNFSVAKVPWVFITNADVRFAPGLIDEFVSQANEKTQGQLERIRRLDQEIIAEARTLRNVPNRRFAFRSSQHPIITASSLPYRIRTMPPEEMKKQFADTYGIFYTDHKDFMATFALSRLAIATVGFFDENYYPAYGEDHDYVWRMAALGYQKYFSEPGKFVHFENANLNVGGSARNRGIFKNTAYFLQSVKFGRMNYQPFRLQYRRAKWFPDGVTIYQDTGRNPLPFNGTIPLDMWVLDTDRRRSIWEIGENIRCHRDYKPYSMKLLDFPVDPS.

The Cytoplasmic portion of the chain corresponds to M1–R18. A helical; Signal-anchor for type II membrane protein membrane pass occupies residues V19–Y38. N-linked (GlcNAc...) asparagine glycans are attached at residues N39, N100, N162, and N388. The Lumenal segment spans residues N39–S434.

It belongs to the glycosyltransferase 2 family.

It is found in the endoplasmic reticulum membrane. Its pathway is glycolipid biosynthesis; glycosylphosphatidylinositol-anchor biosynthesis. Its function is as follows. Glycosyltransferase that may be responsible for the addition of galactofuranosyl residues to the nascent lipophosphoglycan (LPG) chain. It could alternatively be involved in the synthesis of the galactofuranosyl donor. This chain is Galactofuranosyl glycosyltransferase (LPG1), found in Leishmania donovani.